A 721-amino-acid chain; its full sequence is DNA ligase (721 aa).

NAD(+)-binding positions include 42 to 46 (DAEYD), 91 to 92 (SL), and Glu125. The active-site N6-AMP-lysine intermediate is Lys127. The NAD(+) site is built by Arg148, Glu184, Lys300, and Lys324. Residues Cys430, Cys433, Cys448, and Cys454 each coordinate Zn(2+). The BRCT domain occupies 642–721 (STGSPVEGKT…DAWFTLVGEE (80 aa)).

The protein belongs to the NAD-dependent DNA ligase family. LigA subfamily. Mg(2+) serves as cofactor. Mn(2+) is required as a cofactor.

It catalyses the reaction NAD(+) + (deoxyribonucleotide)n-3'-hydroxyl + 5'-phospho-(deoxyribonucleotide)m = (deoxyribonucleotide)n+m + AMP + beta-nicotinamide D-nucleotide.. DNA ligase that catalyzes the formation of phosphodiester linkages between 5'-phosphoryl and 3'-hydroxyl groups in double-stranded DNA using NAD as a coenzyme and as the energy source for the reaction. It is essential for DNA replication and repair of damaged DNA. The chain is DNA ligase from Brucella anthropi (strain ATCC 49188 / DSM 6882 / CCUG 24695 / JCM 21032 / LMG 3331 / NBRC 15819 / NCTC 12168 / Alc 37) (Ochrobactrum anthropi).